A 250-amino-acid polypeptide reads, in one-letter code: MLLIPAIDLKDGQCVRLKQGDMDQATIFSEEPAAMARHWVDRGARRLHLVDLNGAFAGKPKNEDAIRAIIEEVGGEIPVQLGGGIRDLNTIERYLDDGLSYVIIGTAAVKNPGFLQDACTAFGGHIIVGLDAKDGKVATDGWSKLTGHEVADLARKFEDYGCESIIYTDIGRDGMLQGINIEATVRLARAVKIPVIASGGLSNLTDIESLCEVEDEGIEGVICGRAIYSGDLDFAAAQTLADRLRESDDA.

Asp-8 serves as the catalytic Proton acceptor. Residue Asp-131 is the Proton donor of the active site.

It belongs to the HisA/HisF family.

Its subcellular location is the cytoplasm. The catalysed reaction is 1-(5-phospho-beta-D-ribosyl)-5-[(5-phospho-beta-D-ribosylamino)methylideneamino]imidazole-4-carboxamide = 5-[(5-phospho-1-deoxy-D-ribulos-1-ylimino)methylamino]-1-(5-phospho-beta-D-ribosyl)imidazole-4-carboxamide. Its pathway is amino-acid biosynthesis; L-histidine biosynthesis; L-histidine from 5-phospho-alpha-D-ribose 1-diphosphate: step 4/9. This is 1-(5-phosphoribosyl)-5-[(5-phosphoribosylamino)methylideneamino] imidazole-4-carboxamide isomerase from Paraburkholderia phytofirmans (strain DSM 17436 / LMG 22146 / PsJN) (Burkholderia phytofirmans).